The sequence spans 579 residues: Putative ABC transporter ATP-binding protein VPA1482 (579 aa).

ABC transporter domains follow at residues 3-244 (IEFS…GIRE) and 299-533 (LEVR…ANLT). Residues 37–44 (GPSGSGKS) and 332–339 (GKNGSGKS) contribute to the ATP site.

It belongs to the ABC transporter superfamily.

The protein resides in the cell inner membrane. Probably part of an ABC transporter complex. Responsible for energy coupling to the transport system. The chain is Putative ABC transporter ATP-binding protein VPA1482 from Vibrio parahaemolyticus serotype O3:K6 (strain RIMD 2210633).